The following is a 104-amino-acid chain: SOSS complex subunit C (104 aa).

At Ala-2 the chain carries N-acetylalanine. Ser-50 is modified (phosphoserine).

The protein belongs to the SOSS-C family. Component of the SOSS complex, composed of SOSS-B (SOSS-B1/NABP2 or SOSS-B2/NABP1), SOSS-A/INTS3 and SOSS-C/INIP. SOSS complexes containing SOSS-B1/NABP2 are more abundant than complexes containing SOSS-B2/NABP1. Interacts with INTS3; the interaction is direct.

The protein resides in the nucleus. Functionally, component of the SOSS complex, a multiprotein complex that functions downstream of the MRN complex to promote DNA repair and G2/M checkpoint. The SOSS complex associates with single-stranded DNA at DNA lesions and influences diverse endpoints in the cellular DNA damage response including cell-cycle checkpoint activation, recombinational repair and maintenance of genomic stability. Required for efficient homologous recombination-dependent repair of double-strand breaks (DSBs) and ATM-dependent signaling pathways. The polypeptide is SOSS complex subunit C (INIP) (Homo sapiens (Human)).